The following is a 210-amino-acid chain: UPF0173 protein PF0020 (210 aa).

It belongs to the UPF0173 family.

This Pyrococcus furiosus (strain ATCC 43587 / DSM 3638 / JCM 8422 / Vc1) protein is UPF0173 protein PF0020.